We begin with the raw amino-acid sequence, 639 residues long: Probable serine/threonine-protein kinase DDB_G0282777 (639 aa).

Residues 7 to 122 adopt a coiled-coil conformation; sequence LKENKESLKD…EDLKSIILTS (116 aa). Residues 233–588 form the Protein kinase domain; the sequence is MHMVGDIKKG…SNNNQNHTNI (356 aa). Residues 239–247 and Lys-284 contribute to the ATP site; that span reads IKKGSISSD. Asp-439 serves as the catalytic Proton acceptor. A disordered region spans residues 601–639; sequence NTLETSTTNPNTNTTTSDTNTSTTSTTNTNTTTSNTITA.

Belongs to the protein kinase superfamily. Ser/Thr protein kinase family.

It carries out the reaction L-seryl-[protein] + ATP = O-phospho-L-seryl-[protein] + ADP + H(+). The enzyme catalyses L-threonyl-[protein] + ATP = O-phospho-L-threonyl-[protein] + ADP + H(+). This is Probable serine/threonine-protein kinase DDB_G0282777 from Dictyostelium discoideum (Social amoeba).